The primary structure comprises 148 residues: Early glycoprotein GP48 (148 aa).

A signal peptide spans methionine 1–alanine 21. N-linked (GlcNAc...) asparagine; by host glycans are attached at residues asparagine 22, asparagine 44, asparagine 49, asparagine 57, asparagine 65, asparagine 104, asparagine 108, asparagine 118, asparagine 135, and asparagine 144.

It belongs to the RL11 family. Post-translationally, N-glycosylated and possibly O-glycosylated.

Its subcellular location is the virion membrane. This chain is Early glycoprotein GP48 (UL4), found in Homo sapiens (Human).